A 760-amino-acid polypeptide reads, in one-letter code: Xaa-Pro dipeptidyl-peptidase (760 aa).

Catalysis depends on charge relay system residues Ser-349, Asp-469, and His-499.

This sequence belongs to the peptidase S15 family. Homodimer.

Its subcellular location is the cytoplasm. The enzyme catalyses Hydrolyzes Xaa-Pro-|- bonds to release unblocked, N-terminal dipeptides from substrates including Ala-Pro-|-p-nitroanilide and (sequentially) Tyr-Pro-|-Phe-Pro-|-Gly-Pro-|-Ile.. Its function is as follows. Removes N-terminal dipeptides sequentially from polypeptides having unsubstituted N-termini provided that the penultimate residue is proline. The sequence is that of Xaa-Pro dipeptidyl-peptidase from Streptococcus pyogenes serotype M12 (strain MGAS9429).